A 103-amino-acid chain; its full sequence is uncharacterized protein (103 aa).

It localises to the plastid. Its subcellular location is the chloroplast. This is an uncharacterized protein from Auxenochlorella pyrenoidosa (Freshwater green alga).